The primary structure comprises 138 residues: uncharacterized protein (138 aa).

This is an uncharacterized protein from Bacillus subtilis (strain 168).